The chain runs to 63 residues: Cytochrome c oxidase subunit 7C, mitochondrial (63 aa).

The N-terminal 16 residues, Met-1–Arg-16, are a transit peptide targeting the mitochondrion. The Mitochondrial matrix portion of the chain corresponds to Ser-17 to Asn-33. N6-acetyllysine; alternate is present on Lys-25. Position 25 is an N6-succinyllysine; alternate (Lys-25). The helical transmembrane segment at Lys-34–Leu-60 threads the bilayer. The Mitochondrial intermembrane portion of the chain corresponds to Leu-61–Lys-63.

It belongs to the cytochrome c oxidase VIIc family. As to quaternary structure, component of the cytochrome c oxidase (complex IV, CIV), a multisubunit enzyme composed of 14 subunits. The complex is composed of a catalytic core of 3 subunits MT-CO1, MT-CO2 and MT-CO3, encoded in the mitochondrial DNA, and 11 supernumerary subunits COX4I, COX5A, COX5B, COX6A, COX6B, COX6C, COX7A, COX7B, COX7C, COX8 and NDUFA4, which are encoded in the nuclear genome. The complex exists as a monomer or a dimer and forms supercomplexes (SCs) in the inner mitochondrial membrane with NADH-ubiquinone oxidoreductase (complex I, CI) and ubiquinol-cytochrome c oxidoreductase (cytochrome b-c1 complex, complex III, CIII), resulting in different assemblies (supercomplex SCI(1)III(2)IV(1) and megacomplex MCI(2)III(2)IV(2)). Interacts with RAB5IF.

The protein localises to the mitochondrion inner membrane. It functions in the pathway energy metabolism; oxidative phosphorylation. In terms of biological role, component of the cytochrome c oxidase, the last enzyme in the mitochondrial electron transport chain which drives oxidative phosphorylation. The respiratory chain contains 3 multisubunit complexes succinate dehydrogenase (complex II, CII), ubiquinol-cytochrome c oxidoreductase (cytochrome b-c1 complex, complex III, CIII) and cytochrome c oxidase (complex IV, CIV), that cooperate to transfer electrons derived from NADH and succinate to molecular oxygen, creating an electrochemical gradient over the inner membrane that drives transmembrane transport and the ATP synthase. Cytochrome c oxidase is the component of the respiratory chain that catalyzes the reduction of oxygen to water. Electrons originating from reduced cytochrome c in the intermembrane space (IMS) are transferred via the dinuclear copper A center (CU(A)) of subunit 2 and heme A of subunit 1 to the active site in subunit 1, a binuclear center (BNC) formed by heme A3 and copper B (CU(B)). The BNC reduces molecular oxygen to 2 water molecules using 4 electrons from cytochrome c in the IMS and 4 protons from the mitochondrial matrix. The protein is Cytochrome c oxidase subunit 7C, mitochondrial (COX7C) of Carlito syrichta (Philippine tarsier).